The primary structure comprises 967 residues: Isoleucine--tRNA ligase (967 aa).

The short motif at 64–74 (PYANGNIHIGH) is the 'HIGH' region element. An L-isoleucyl-5'-AMP-binding site is contributed by glutamate 600. A 'KMSKS' region motif is present at residues 641 to 645 (KQSKS). Lysine 644 provides a ligand contact to ATP.

This sequence belongs to the class-I aminoacyl-tRNA synthetase family. IleS type 1 subfamily. As to quaternary structure, monomer.

It localises to the cytoplasm. The catalysed reaction is tRNA(Ile) + L-isoleucine + ATP = L-isoleucyl-tRNA(Ile) + AMP + diphosphate. Functionally, catalyzes the attachment of isoleucine to tRNA(Ile). As IleRS can inadvertently accommodate and process structurally similar amino acids such as valine, to avoid such errors it has two additional distinct tRNA(Ile)-dependent editing activities. One activity is designated as 'pretransfer' editing and involves the hydrolysis of activated Val-AMP. The other activity is designated 'posttransfer' editing and involves deacylation of mischarged Val-tRNA(Ile). In Agrobacterium fabrum (strain C58 / ATCC 33970) (Agrobacterium tumefaciens (strain C58)), this protein is Isoleucine--tRNA ligase.